The following is a 318-amino-acid chain: Bis(5'-nucleosyl)-tetraphosphatase, symmetrical (318 aa).

A disordered region spans residues P269–D318. Basic residues predominate over residues A282–G297. Positions A309–D318 are enriched in pro residues.

This sequence belongs to the Ap4A hydrolase family.

The catalysed reaction is P(1),P(4)-bis(5'-adenosyl) tetraphosphate + H2O = 2 ADP + 2 H(+). In terms of biological role, hydrolyzes diadenosine 5',5'''-P1,P4-tetraphosphate to yield ADP. The chain is Bis(5'-nucleosyl)-tetraphosphatase, symmetrical from Xanthomonas oryzae pv. oryzae (strain MAFF 311018).